Reading from the N-terminus, the 431-residue chain is UPF0597 protein LCA_0156 (431 aa).

Belongs to the UPF0597 family.

The chain is UPF0597 protein LCA_0156 from Latilactobacillus sakei subsp. sakei (strain 23K) (Lactobacillus sakei subsp. sakei).